The primary structure comprises 250 residues: Eukaryotic translation initiation factor 2 subunit 2 (250 aa).

The C4-type zinc-finger motif lies at 193–217 (CHTCKSPETQLTKDTRLFFLQCTNC).

Belongs to the eIF-2-beta/eIF-5 family. In terms of assembly, eukaryotic translation initiation factor 2 eIF2 is a heterotrimeric complex composed of an alpha, a beta and a gamma subunit.

It localises to the cytoplasm. It is found in the cytosol. In terms of biological role, component of the eIF2 complex that functions in the early steps of protein synthesis by forming a ternary complex with GTP and initiator tRNA. This complex binds to a 40S ribosomal subunit, followed by mRNA binding to form a 43S pre-initiation complex (43S PIC). Junction of the 60S ribosomal subunit to form the 80S initiation complex is preceded by hydrolysis of the GTP bound to eIF2 and release of an eIF2-GDP binary complex. In order for eIF2 to recycle and catalyze another round of initiation, the GDP bound to eIF2 must exchange with GTP by way of a reaction catalyzed by eIF2B. The chain is Eukaryotic translation initiation factor 2 subunit 2 from Caenorhabditis elegans.